The primary structure comprises 269 residues: Probable 3-deoxy-manno-octulosonic acid transferase (269 aa).

Its subcellular location is the cytoplasm. It carries out the reaction an alpha-Kdo-(2-&gt;4)-alpha-Kdo-(2-&gt;6)-lipid IVA + CMP-3-deoxy-beta-D-manno-octulosonate = an alpha-Kdo-(2-&gt;4)-alpha-Kdo-(2-&gt;4)-alpha-Kdo-(2-&gt;6)-lipid IVA + CMP + H(+). It participates in bacterial outer membrane biogenesis; LPS core biosynthesis. Its function is as follows. Involved in the biosynthesis of the core oligosaccharide region of lipopolysaccharide (LPS). Required for the addition of 3-deoxy-D-manno-oct-2-ulosonic acid III (KdoIII) to the KdoII residue of the inner lipopolysaccharide core. This is Probable 3-deoxy-manno-octulosonic acid transferase from Salmonella typhimurium (strain LT2 / SGSC1412 / ATCC 700720).